We begin with the raw amino-acid sequence, 395 residues long: uncharacterized protein (395 aa).

10 helical membrane passes run 19–39, 49–69, 87–107, 137–157, 172–192, 206–226, 252–272, 279–299, 311–331, and 359–379; these read IGIA…IAII, VLLI…IYEL, LTWI…AVGG, LVII…PLGT, YINL…FYLI, TINI…SLIA, LIGG…MGMG, LFIM…KILA, GLVF…GSLI, and VLCT…GAVI.

The protein belongs to the chloride channel (TC 2.A.49) family.

The protein localises to the cell membrane. This is an uncharacterized protein from Methanocaldococcus jannaschii (strain ATCC 43067 / DSM 2661 / JAL-1 / JCM 10045 / NBRC 100440) (Methanococcus jannaschii).